The sequence spans 210 residues: Large ribosomal subunit protein uL4 (210 aa).

Belongs to the universal ribosomal protein uL4 family. In terms of assembly, part of the 50S ribosomal subunit.

In terms of biological role, one of the primary rRNA binding proteins, this protein initially binds near the 5'-end of the 23S rRNA. It is important during the early stages of 50S assembly. It makes multiple contacts with different domains of the 23S rRNA in the assembled 50S subunit and ribosome. Forms part of the polypeptide exit tunnel. The polypeptide is Large ribosomal subunit protein uL4 (rplD) (Thermus thermophilus).